A 196-amino-acid polypeptide reads, in one-letter code: Small ribosomal subunit protein uS4c (196 aa).

Residues 15 to 43 (LGALPGLTRKTPKSGSNQKKKFHSGKKEQ) form a disordered region. The S4 RNA-binding domain occupies 89 to 150 (MRLDNILFRL…NQRSKRLVQN (62 aa)).

Belongs to the universal ribosomal protein uS4 family. As to quaternary structure, part of the 30S ribosomal subunit. Contacts protein S5. The interaction surface between S4 and S5 is involved in control of translational fidelity.

It localises to the plastid. The protein localises to the chloroplast. In terms of biological role, one of the primary rRNA binding proteins, it binds directly to 16S rRNA where it nucleates assembly of the body of the 30S subunit. Functionally, with S5 and S12 plays an important role in translational accuracy. This is Small ribosomal subunit protein uS4c (rps4) from Melinis repens (Red Natal grass).